The following is an 830-amino-acid chain: P-selectin (830 aa).

Positions 1–41 are cleaved as a signal peptide; it reads MANCQIAILYQRFQRVVFGISQLLCFSALISELTNQKEVAA. Over 42–771 the chain is Extracellular; that stretch reads WTYHYSTKAY…QAGPLTIQEA (730 aa). Residues Asn-54 and Asn-98 are each glycosylated (N-linked (GlcNAc...) asparagine). The C-type lectin domain occupies 58 to 158; sequence KYCQNRYTDL…HCLKKKHALC (101 aa). Cystine bridges form between Cys-60–Cys-158, Cys-131–Cys-150, Cys-163–Cys-174, Cys-168–Cys-183, Cys-185–Cys-194, Cys-200–Cys-244, Cys-230–Cys-257, Cys-262–Cys-306, Cys-292–Cys-319, Cys-324–Cys-368, Cys-354–Cys-381, Cys-386–Cys-430, Cys-416–Cys-443, Cys-448–Cys-492, Cys-478–Cys-505, Cys-510–Cys-554, Cys-540–Cys-567, Cys-572–Cys-616, Cys-602–Cys-629, Cys-642–Cys-686, Cys-672–Cys-699, Cys-704–Cys-748, and Cys-734–Cys-761. 3 residues coordinate Ca(2+): Glu-121, Asn-123, and Asn-124. An a carbohydrate-binding site is contributed by Asn-123. 2 residues coordinate a carbohydrate: Glu-133 and Asn-146. Asn-146 and Asp-147 together coordinate Ca(2+). The 37-residue stretch at 159 to 195 folds into the EGF-like domain; it reads YTASCQDMSCSKQGECLETIGNYTCSCYPGFYGPECE. Asn-180 is a glycosylation site (N-linked (GlcNAc...) asparagine). Sushi domains follow at residues 198–259, 260–321, 322–383, 384–445, 446–507, 508–569, 570–631, 640–701, and 702–763; these read RECG…QCLA, AQCP…VCKA, VQCQ…TCEA, ISCE…VCQA, LQCQ…ECQA, IPCT…MCEA, IKCP…TCKG, VQCP…ACRA, and VKCS…TCQA. Residues Asn-212 and Asn-219 are each glycosylated (N-linked (GlcNAc...) asparagine). N-linked (GlcNAc...) asparagine glycosylation occurs at Asn-411. N-linked (GlcNAc...) asparagine glycosylation is present at Asn-460. The N-linked (GlcNAc...) asparagine glycan is linked to Asn-518. Asn-665 carries an N-linked (GlcNAc...) asparagine glycan. Residues Asn-716, Asn-723, and Asn-741 are each glycosylated (N-linked (GlcNAc...) asparagine). Residues 772–795 form a helical membrane-spanning segment; that stretch reads LTYFGGAVASTIGLIMGGTLLALL. Over 796–830 the chain is Cytoplasmic; it reads RKRFRQKDDGKCPLNPHSHLGTYGVFTNAAFDPSP. Residue Cys-807 is the site of S-palmitoyl cysteine; alternate attachment. Cys-807 is lipidated: S-stearoyl cysteine; alternate. The Endocytosis signal motif lies at 818-821; it reads YGVF. An interaction with SNX17 region spans residues 821–830; sequence FTNAAFDPSP.

It belongs to the selectin/LECAM family. Interacts with SNX17. Interacts with SELPLG/PSGL1 and PODXL2 and mediates neutrophil adhesion and leukocyte rolling. This interaction requires the sialyl-Lewis X epitope of SELPLG and PODXL2, and specific tyrosine sulfation on SELPLG. Interacts (via C-type lectin domain) with alpha-IIb/beta3 integrin ITGA2B:ITGB3 and alpha-V/beta-3 integrin ITGAV:ITGB3. Interacts with alpha5/beta1 integrin ITGA5:ITGB1 and alpha4/beta1 integrin ITGA4:ITGB. As to expression, stored in the alpha-granules of platelets and Weibel-Palade bodies of endothelial cells. Upon cell activation by agonists, P-selectin is transported rapidly to the cell surface.

It is found in the cell membrane. In terms of biological role, ca(2+)-dependent receptor for myeloid cells that binds to carbohydrates on neutrophils and monocytes. Mediates the interaction of activated endothelial cells or platelets with leukocytes. The ligand recognized is sialyl-Lewis X. Mediates rapid rolling of leukocyte rolling over vascular surfaces during the initial steps in inflammation through interaction with SELPLG. Mediates cell-cell interactions and cell adhesion via the interaction with integrin alpha-IIb/beta3 (ITGA2B:ITGB3) and integrin alpha-V/beta-3 (ITGAV:ITGB3). The polypeptide is P-selectin (SELP) (Homo sapiens (Human)).